The primary structure comprises 101 residues: ATP-dependent Clp protease adapter protein ClpS 2 (101 aa).

This sequence belongs to the ClpS family. As to quaternary structure, binds to the N-terminal domain of the chaperone ClpA.

Involved in the modulation of the specificity of the ClpAP-mediated ATP-dependent protein degradation. The polypeptide is ATP-dependent Clp protease adapter protein ClpS 2 (Rhizobium meliloti (strain 1021) (Ensifer meliloti)).